The following is a 277-amino-acid chain: Probable endonuclease 4 (277 aa).

Zn(2+)-binding residues include His-70, His-108, Glu-143, Asp-176, His-179, His-210, Asp-223, His-225, and Glu-255.

It belongs to the AP endonuclease 2 family. Zn(2+) is required as a cofactor.

It catalyses the reaction Endonucleolytic cleavage to 5'-phosphooligonucleotide end-products.. Functionally, endonuclease IV plays a role in DNA repair. It cleaves phosphodiester bonds at apurinic or apyrimidinic (AP) sites, generating a 3'-hydroxyl group and a 5'-terminal sugar phosphate. The protein is Probable endonuclease 4 of Mycoplasmopsis synoviae (strain 53) (Mycoplasma synoviae).